Reading from the N-terminus, the 87-residue chain is Putative defensin-like protein 84 (87 aa).

Positions 1–27 are cleaved as a signal peptide; that stretch reads MTTKMVSSHRLLTLMVFALLLIPMISG. 4 disulfides stabilise this stretch: C32–C73, C36–C54, C42–C71, and C46–C72.

It belongs to the DEFL family.

Its subcellular location is the secreted. This chain is Putative defensin-like protein 84, found in Arabidopsis thaliana (Mouse-ear cress).